The primary structure comprises 85 residues: UPF0297 protein CD630_12830 (85 aa).

It belongs to the UPF0297 family.

This is UPF0297 protein CD630_12830 from Clostridioides difficile (strain 630) (Peptoclostridium difficile).